Reading from the N-terminus, the 1604-residue chain is MESQQLSQHSPISHGSACASVTSKEVHTNQDPLDVSASKTEECEKASTKANSQQTTTPASSAVPENPHHASPQPASVPPPQNGPYPQQCMMTQNQANPSGWSFYGHPSMIPYTPYQMSPMYFPPGPQSQFPQYPSSVGTPLSTPSPESGNTFTDSSSADSDMTSTKKYVRPPPMLTSPNDFPNWVKTYIKFLQNSNLGGIIPTVNGKPVRQITDDELTFLYNTFQIFAPSQFLPTWVKDILSVDYTDIMKILSKSIEKMQSDTQEANDIVTLANLQYNGSTPADAFETKVTNIIDRLNNNGIHINNKVACQLIMRGLSGEYKFLRYTRHRHLNMTVAELFLDIHAIYEEQQGSRNSKPNYRRNPSDEKNDSRSYTNTTKPKVIARNPQKTNNSKSKTARAHNVSTSNNSPSTDNDSISKSTTEPIQLNNKHDLHLGQKLTESTVNHTNHSDDELPGHLLLDSGASRTLIRSAHHIHSASSNPDINVVDAQKRNIPINAIGDLQFHFQDNTKTSIKVLHTPNIAYDLLSLNELAAVDITACFTKNVLERSDGTVLAPIVKYGDFYWVSKKYLLPSNISVPTINNVHTSESTRKYPYPFIHRMLAHANAQTIRYSLKNNTITYFNESDVDWSSAIDYQCPDCLIGKSTKHRHIKGSRLKYQNSYEPFQYLHTDIFGPVHNLPNSAPSYFISFTDETTKFRWVYPLHDRREDSILDVFTTILAFIKNQFQASVLVIQMDRGSEYTNRTLHKFLEKNGITPCYTTTADSRAHGVAERLNRTLLDDCRTQLQCSGLPNHLWFSAIEFSTIVRNSLASPKSKKSARQHAGLAGLDISTLLPFGQPVIVNDHNPNSKIHPRGIPGYALHPSRNSYGYIIYLPSLKKTVDTTNYVILQGKESRLDQFNYDALTFDEDLNRLTASYHSFIASNEIQESNDLNIESDHDFQSDIELHPEQPRNVLSKAVSPTDSTPPSTHTEDSKRVSKTNIRAPREVDPNISESNILPSKKRSSTPQISNIESTGSGGMHKLNVPLLAPMSQSNTHESSHASKSKDFRHSDSYSENETNHTNVPISSTGGTNNKTVPQISDQETEKRIIHRSPSIDASPPENNSSHNIVPIKTPTTVSEQNTEESIIADLPLPDLPPESPTEFPDPFKELPPINSRQTNSSLGGIGDSNAYTTINSKKRSLEDNETEIKVSRDTWNTKNMRSLEPPRSKKRIHLIAAVKAVKSIKPIRTTLRYDEAITYNKDIKEKEKYIEAYHKEVNQLLKMKTWDTDEYYDRKEIDPKRVINSMFIFNKKRDGTHKARFVARGDIQHPDTYDSGMQSNTVHHYALMTSLSLALDNNYYITQLDISSAYLYADIKEELYIRPPPHLGMNDKLIRLKKSLYGLKQSGANWYETIKSYLIQQCGMEEVRGWSCVFKNSQVTICLFVDDMVLFSKNLNSNKRIIEKLKMQYDTKIINLGESDEEIQYDILGLEIKYQRGKYMKLGMENSLTEKIPKLNVPLNPKGRKLSAPGQPGLYIDQDELEIDEDEYKEKVHEMQKLIGLASYVGYKFRFDLLYYINTLAQHILFPSRQVLDMTYELIQFMWDTRDKQLIWHKHKTSSDKNI.

Polar residues-rich tracts occupy residues 1-23 (MESQQLSQHSPISHGSACASVTS), 48-60 (TKANSQQTTTPAS), and 127-152 (QSQFPQYPSSVGTPLSTPSPESGNTF). Disordered regions lie at residues 1-93 (MESQ…MMTQ), 126-174 (PQSQ…PPPM), and 352-421 (GSRN…SKST). Low complexity predominate over residues 153–165 (TDSSSADSDMTST). The interval 299–401 (NNGIHINNKV…NSKSKTARAH (103 aa)) is RNA-binding. The segment covering 402–418 (NVSTSNNSPSTDNDSIS) has biased composition (low complexity). S416 bears the Phosphoserine mark. The active-site For protease activity; shared with dimeric partner is the D461. The tract at residues 583-640 (NVHTSESTRKYPYPFIHRMLAHANAQTIRYSLKNNTITYFNESDVDWSSAIDYQCPDC) is integrase-type zinc finger-like. One can recognise an Integrase catalytic domain in the interval 660–835 (NSYEPFQYLH…AGLDISTLLP (176 aa)). Residues D671 and D736 each coordinate Mg(2+). Disordered stretches follow at residues 956–1087 (SKAV…ETEK), 1092–1111 (RSPSIDASPPENNSSHNIVP), and 1130–1187 (DLPL…DNET). A compositionally biased stretch (low complexity) spans 960–969 (SPTDSTPPST). Polar residues predominate over residues 1005 to 1015 (STPQISNIEST). The span at 1038–1053 (ESSHASKSKDFRHSDS) shows a compositional bias: basic and acidic residues. Composition is skewed to polar residues over residues 1054 to 1082 (YSENETNHTNVPISSTGGTNNKTVPQISD) and 1101 to 1111 (PENNSSHNIVP). A Bipartite nuclear localization signal motif is present at residues 1178-1212 (KKRSLEDNETEIKVSRDTWNTKNMRSLEPPRSKKR). The Reverse transcriptase Ty1/copia-type domain occupies 1338–1476 (NNYYITQLDI…DILGLEIKYQ (139 aa)). Residues D1346, D1427, and D1428 each contribute to the Mg(2+) site.

As to quaternary structure, the capsid protein forms a homotrimer, from which the VLPs are assembled. The protease is a homodimer, whose active site consists of two apposed aspartic acid residues. Initially, virus-like particles (VLPs) are composed of the structural unprocessed proteins Gag and Gag-Pol, and also contain the host initiator methionine tRNA (tRNA(i)-Met) which serves as a primer for minus-strand DNA synthesis, and a dimer of genomic Ty RNA. Processing of the polyproteins occurs within the particle and proceeds by an ordered pathway, called maturation. First, the protease (PR) is released by autocatalytic cleavage of the Gag-Pol polyprotein yielding capsid protein p45 and a Pol-p154 precursor protein. This cleavage is a prerequisite for subsequent processing of Pol-p154 at the remaining sites to release the mature structural and catalytic proteins. Maturation takes place prior to the RT reaction and is required to produce transposition-competent VLPs.

It localises to the cytoplasm. The protein resides in the nucleus. It carries out the reaction DNA(n) + a 2'-deoxyribonucleoside 5'-triphosphate = DNA(n+1) + diphosphate. The enzyme catalyses Endonucleolytic cleavage to 5'-phosphomonoester.. In terms of biological role, capsid protein (CA) is the structural component of the virus-like particle (VLP), forming the shell that encapsulates the retrotransposons dimeric RNA genome. The particles are assembled from trimer-clustered units and there are holes in the capsid shells that allow for the diffusion of macromolecules. CA also has nucleocapsid-like chaperone activity, promoting primer tRNA(i)-Met annealing to the multipartite primer-binding site (PBS), dimerization of Ty1 RNA and initiation of reverse transcription. Its function is as follows. The aspartyl protease (PR) mediates the proteolytic cleavages of the Gag and Gag-Pol polyproteins after assembly of the VLP. Reverse transcriptase/ribonuclease H (RT) is a multifunctional enzyme that catalyzes the conversion of the retro-elements RNA genome into dsDNA within the VLP. The enzyme displays a DNA polymerase activity that can copy either DNA or RNA templates, and a ribonuclease H (RNase H) activity that cleaves the RNA strand of RNA-DNA heteroduplexes during plus-strand synthesis and hydrolyzes RNA primers. The conversion leads to a linear dsDNA copy of the retrotransposon that includes long terminal repeats (LTRs) at both ends. Functionally, integrase (IN) targets the VLP to the nucleus, where a subparticle preintegration complex (PIC) containing at least integrase and the newly synthesized dsDNA copy of the retrotransposon must transit the nuclear membrane. Once in the nucleus, integrase performs the integration of the dsDNA into the host genome. The polypeptide is Transposon Ty1-DR4 Gag-Pol polyprotein (TY1B-DR4) (Saccharomyces cerevisiae (strain ATCC 204508 / S288c) (Baker's yeast)).